The primary structure comprises 169 residues: ATP synthase subunit b (169 aa).

Residues T14 to F34 traverse the membrane as a helical segment.

This sequence belongs to the ATPase B chain family. F-type ATPases have 2 components, F(1) - the catalytic core - and F(0) - the membrane proton channel. F(1) has five subunits: alpha(3), beta(3), gamma(1), delta(1), epsilon(1). F(0) has four main subunits: a(1), b(2) and c(10-14). The alpha and beta chains form an alternating ring which encloses part of the gamma chain. F(1) is attached to F(0) by a central stalk formed by the gamma and epsilon chains, while a peripheral stalk is formed by the delta and b chains.

Its subcellular location is the cell membrane. F(1)F(0) ATP synthase produces ATP from ADP in the presence of a proton or sodium gradient. F-type ATPases consist of two structural domains, F(1) containing the extramembraneous catalytic core and F(0) containing the membrane proton channel, linked together by a central stalk and a peripheral stalk. During catalysis, ATP synthesis in the catalytic domain of F(1) is coupled via a rotary mechanism of the central stalk subunits to proton translocation. Its function is as follows. Component of the F(0) channel, it forms part of the peripheral stalk, linking F(1) to F(0). The protein is ATP synthase subunit b of Heliobacterium modesticaldum (strain ATCC 51547 / Ice1).